The primary structure comprises 564 residues: NAD-dependent malic enzyme (564 aa).

Residue Tyr102 is the Proton donor of the active site. Residue Arg155 coordinates NAD(+). The active-site Proton acceptor is Lys173. A divalent metal cation is bound by residues Glu244, Asp245, and Asp268. Residues Asp268 and Asn417 each coordinate NAD(+).

It belongs to the malic enzymes family. As to quaternary structure, homotetramer. Mg(2+) serves as cofactor. It depends on Mn(2+) as a cofactor.

It catalyses the reaction (S)-malate + NAD(+) = pyruvate + CO2 + NADH. The enzyme catalyses oxaloacetate + H(+) = pyruvate + CO2. This Pseudomonas aeruginosa (strain ATCC 15692 / DSM 22644 / CIP 104116 / JCM 14847 / LMG 12228 / 1C / PRS 101 / PAO1) protein is NAD-dependent malic enzyme.